A 440-amino-acid chain; its full sequence is MDKLLIRGGRPLVGEVPISGAKNAALPELCAALLTADPVTLHNVPRLQDVATMLRLIRNMGVQVDRIANPDCSVADAAGIVRLDAGALSTPEAPYDLVKTMRASVLALGPLLARFGEATVSLPGGCAIGSRPVDQHIKGLQAMGAQIVVEHGYMIARLPQGCTRLRGARITTDMVTVTGTENLLMAATLAEGETVLENAAQEPEVADLAEMLIKMGARIEGHGTSRIRIQGVERLHGCEHAVVADRIEAGTFLCAVAATGGDALLRHGRADHLDAVIDKLRDAGVQVAPEEGGIRVRSPGAAQLKAQGFRTTEYPGFPTDMQAQFMALNVVAQGTATVAETIFENRFMHVNELLRLGAKIQTTDGRVAVIEGLGGAAPAGARLSGATVMATDLRASASLVIAGLVADGETLVDRIYHLDRGYDCMEAKLRGLGADIERIQ.

22-23 (KN) is a binding site for phosphoenolpyruvate. A UDP-N-acetyl-alpha-D-glucosamine-binding site is contributed by arginine 102. Catalysis depends on cysteine 126, which acts as the Proton donor. Residue cysteine 126 is modified to 2-(S-cysteinyl)pyruvic acid O-phosphothioketal. Residues 131-135 (RPVDQ), aspartate 320, and isoleucine 342 each bind UDP-N-acetyl-alpha-D-glucosamine.

Belongs to the EPSP synthase family. MurA subfamily.

The protein localises to the cytoplasm. It catalyses the reaction phosphoenolpyruvate + UDP-N-acetyl-alpha-D-glucosamine = UDP-N-acetyl-3-O-(1-carboxyvinyl)-alpha-D-glucosamine + phosphate. It participates in cell wall biogenesis; peptidoglycan biosynthesis. Functionally, cell wall formation. Adds enolpyruvyl to UDP-N-acetylglucosamine. This Acidovorax ebreus (strain TPSY) (Diaphorobacter sp. (strain TPSY)) protein is UDP-N-acetylglucosamine 1-carboxyvinyltransferase.